The sequence spans 378 residues: Nucleosome assembly protein 1;1 (378 aa).

Positions 33 to 87 (VNALKDKLQSLAGQHTDVLEALSPNVRKRVEYLREIQGQHDEIELKFFEERAALE) form a coiled coil. Positions 54–69 (LSPNVRKRVEYLREIQ) match the Nuclear export signal motif. Residues 230 to 235 (KKKPKK) carry the Nuclear localization signal motif. The disordered stretch occupies residues 306-378 (AVQAEDFDDM…ADQPADCKQQ (73 aa)). Positions 308-344 (QAEDFDDMEDDEEDDEDDDEDEEEEEEDEDEDEDDEE) are enriched in acidic residues. The short motif at 348-352 (KPKKK) is the Nuclear localization signal element. Over residues 356–378 (KPKLPSKGGAQGGADQPADCKQQ) the composition is skewed to low complexity. Cysteine methyl ester is present on cysteine 375. The S-farnesyl cysteine moiety is linked to residue cysteine 375. The propeptide at 376-378 (KQQ) is removed in mature form.

Belongs to the nucleosome assembly protein (NAP) family.

The protein localises to the nucleus. Its subcellular location is the cytoplasm. Its function is as follows. May modulate chromatin structure by regulation of nucleosome assembly/disassembly. This is Nucleosome assembly protein 1;1 (NAP1;1) from Oryza sativa subsp. japonica (Rice).